The primary structure comprises 56 residues: Large ribosomal subunit protein bL32 (56 aa).

Residues 1–16 (MAVQKSKKSRSMRGMR) show a composition bias toward basic residues. The tract at residues 1 to 33 (MAVQKSKKSRSMRGMRRSHDALTTSAVSVDATS) is disordered. Polar residues predominate over residues 21 to 33 (ALTTSAVSVDATS).

This sequence belongs to the bacterial ribosomal protein bL32 family.

The polypeptide is Large ribosomal subunit protein bL32 (Aliivibrio fischeri (strain ATCC 700601 / ES114) (Vibrio fischeri)).